A 429-amino-acid polypeptide reads, in one-letter code: Enolase (429 aa).

(2R)-2-phosphoglycerate is bound at residue Gln163. Glu205 (proton donor) is an active-site residue. Residues Asp242, Glu285, and Asp312 each coordinate Mg(2+). The (2R)-2-phosphoglycerate site is built by Lys337, Arg366, Ser367, and Lys388. The active-site Proton acceptor is Lys337.

This sequence belongs to the enolase family. Mg(2+) serves as cofactor.

Its subcellular location is the cytoplasm. The protein localises to the secreted. It is found in the cell surface. It carries out the reaction (2R)-2-phosphoglycerate = phosphoenolpyruvate + H2O. It participates in carbohydrate degradation; glycolysis; pyruvate from D-glyceraldehyde 3-phosphate: step 4/5. Its function is as follows. Catalyzes the reversible conversion of 2-phosphoglycerate (2-PG) into phosphoenolpyruvate (PEP). It is essential for the degradation of carbohydrates via glycolysis. The sequence is that of Enolase from Aromatoleum aromaticum (strain DSM 19018 / LMG 30748 / EbN1) (Azoarcus sp. (strain EbN1)).